The sequence spans 188 residues: Dual specificity protein phosphatase 18 (188 aa).

The 142-residue stretch at 19–160 folds into the Tyrosine-protein phosphatase domain; it reads GLSQITSSLY…LIHYEFQLFG (142 aa). The sufficient for mitochondrial localization stretch occupies residues 95–141; the sequence is MKQGRTLLHCAAGVSRSAALCLAYLMKYHAMSLLDAHTWTKSCRPII. The active-site Phosphocysteine intermediate is Cys-104.

This sequence belongs to the protein-tyrosine phosphatase family. Non-receptor class dual specificity subfamily.

It localises to the cytoplasm. Its subcellular location is the nucleus. The protein localises to the mitochondrion inner membrane. It carries out the reaction O-phospho-L-tyrosyl-[protein] + H2O = L-tyrosyl-[protein] + phosphate. It catalyses the reaction O-phospho-L-seryl-[protein] + H2O = L-seryl-[protein] + phosphate. The enzyme catalyses O-phospho-L-threonyl-[protein] + H2O = L-threonyl-[protein] + phosphate. In terms of biological role, can dephosphorylate single and diphosphorylated synthetic MAPK peptides, with preference for the phosphotyrosine and diphosphorylated forms over phosphothreonine. In vitro, dephosphorylates p-nitrophenyl phosphate (pNPP). This Bos taurus (Bovine) protein is Dual specificity protein phosphatase 18 (DUSP18).